Consider the following 310-residue polypeptide: MSKIFVFGHQNPDSDAIGSSYGYAYLKRQLGVEAEAVALGTPNEETAFVLDYFSVNAPRVVESARSEGVNQVILTDHNEFQQSISDIKDVEVIEVVDHHRVANFETANPLMMRLEPVGSASSIVYRMFKENNVEIPKDVAGLLLSGLISDTLLLKSPTTHASDPAVAEELARLAGVNLEEYGLAMLKAGTNLSSKSAEELIDIDAKTFELNGNQVRVAQVNTVDISDVLSRQAEIEEAINSSIKSNGYSDFVLMITDILNSNSEILALGSNTDKIEKAFNFVLENNHAFLKGAVSRKKQVVPQLTESFNV.

Residues H9, D13, D15, D76, H98, and D150 each coordinate Mn(2+).

This sequence belongs to the PPase class C family. It depends on Mn(2+) as a cofactor.

The protein resides in the cytoplasm. The catalysed reaction is diphosphate + H2O = 2 phosphate + H(+). The polypeptide is Probable manganese-dependent inorganic pyrophosphatase (Streptococcus thermophilus (strain ATCC BAA-491 / LMD-9)).